The chain runs to 605 residues: Glutamine--fructose-6-phosphate aminotransferase [isomerizing] (605 aa).

Cys2 functions as the Nucleophile; for GATase activity in the catalytic mechanism. One can recognise a Glutamine amidotransferase type-2 domain in the interval 2-216; the sequence is CGIVGIVGHQ…DGDWAVIGKT (215 aa). SIS domains are found at residues 280 to 420 and 454 to 595; these read DSDA…ARGT and LSRE…VDQP. Lys600 (for Fru-6P isomerization activity) is an active-site residue.

It localises to the cytoplasm. The enzyme catalyses D-fructose 6-phosphate + L-glutamine = D-glucosamine 6-phosphate + L-glutamate. Functionally, involved in the production of the root hair deformation (HAD) factor specifically on medicago. This chain is Glutamine--fructose-6-phosphate aminotransferase [isomerizing] (nodM), found in Rhizobium meliloti (Ensifer meliloti).